Reading from the N-terminus, the 217-residue chain is Ribulose-phosphate 3-epimerase (217 aa).

Residue serine 6 participates in substrate binding. A divalent metal cation contacts are provided by histidine 29, aspartate 31, and histidine 62. Residue aspartate 31 is the Proton acceptor of the active site. Substrate contacts are provided by residues histidine 62, 138 to 141 (GFGG), 171 to 173 (DGG), and 193 to 194 (GS). Aspartate 171 is a binding site for a divalent metal cation. Aspartate 171 acts as the Proton donor in catalysis.

It belongs to the ribulose-phosphate 3-epimerase family. A divalent metal cation serves as cofactor.

It catalyses the reaction D-ribulose 5-phosphate = D-xylulose 5-phosphate. The protein operates within carbohydrate degradation. In terms of biological role, catalyzes the reversible epimerization of D-ribulose 5-phosphate to D-xylulose 5-phosphate. In Helicobacter pylori (strain J99 / ATCC 700824) (Campylobacter pylori J99), this protein is Ribulose-phosphate 3-epimerase.